Reading from the N-terminus, the 157-residue chain is Ribonuclease H (157 aa).

In terms of domain architecture, RNase H type-1 spans 4-146 (KRTEITIYTD…CDKLAVKASQ (143 aa)). Mg(2+) is bound by residues Asp-13, Glu-51, Asp-73, and Asp-138.

The protein belongs to the RNase H family. As to quaternary structure, monomer. Requires Mg(2+) as cofactor.

It is found in the cytoplasm. The enzyme catalyses Endonucleolytic cleavage to 5'-phosphomonoester.. In terms of biological role, endonuclease that specifically degrades the RNA of RNA-DNA hybrids. This chain is Ribonuclease H, found in Trichodesmium erythraeum (strain IMS101).